The primary structure comprises 111 residues: Cytochrome c (111 aa).

A1 carries the post-translational modification N-acetylalanine. Residues C22, C25, and H26 each contribute to the heme c site. K80 carries the N6,N6,N6-trimethyllysine modification. Heme c is bound at residue M88. K94 bears the N6,N6,N6-trimethyllysine mark.

The protein belongs to the cytochrome c family. In terms of processing, binds 1 heme c group covalently per subunit.

The protein resides in the mitochondrion intermembrane space. Its function is as follows. Electron carrier protein. The oxidized form of the cytochrome c heme group can accept an electron from the heme group of the cytochrome c1 subunit of cytochrome reductase. Cytochrome c then transfers this electron to the cytochrome oxidase complex, the final protein carrier in the mitochondrial electron-transport chain. This chain is Cytochrome c, found in Cucurbita maxima (Pumpkin).